We begin with the raw amino-acid sequence, 115 residues long: Large ribosomal subunit protein bL20c (115 aa).

This sequence belongs to the bacterial ribosomal protein bL20 family.

It localises to the plastid. The protein localises to the chloroplast. In terms of biological role, binds directly to 23S ribosomal RNA and is necessary for the in vitro assembly process of the 50S ribosomal subunit. It is not involved in the protein synthesizing functions of that subunit. The polypeptide is Large ribosomal subunit protein bL20c (Chaetosphaeridium globosum (Charophycean green alga)).